The sequence spans 550 residues: CTP synthase (550 aa).

The amidoligase domain stretch occupies residues 1–270 (MTKFVFVTGG…DRLICEELRL (270 aa)). Serine 13 contributes to the CTP binding site. Serine 13 lines the UTP pocket. Residues 14–19 (SLGKGI) and aspartate 71 each bind ATP. Residues aspartate 71 and glutamate 144 each contribute to the Mg(2+) site. Residues 151 to 153 (DIE), 191 to 196 (KTKPTQ), and lysine 227 contribute to the CTP site. Residues 191 to 196 (KTKPTQ) and lysine 227 contribute to the UTP site. The Glutamine amidotransferase type-1 domain maps to 295 to 547 (TIGMVGKYVD…VEAALASQQR (253 aa)). Position 356 (glycine 356) interacts with L-glutamine. The active-site Nucleophile; for glutamine hydrolysis is cysteine 383. L-glutamine-binding positions include 384–387 (LGMQ), glutamate 407, and arginine 473. Residues histidine 520 and glutamate 522 contribute to the active site.

This sequence belongs to the CTP synthase family. Homotetramer.

It carries out the reaction UTP + L-glutamine + ATP + H2O = CTP + L-glutamate + ADP + phosphate + 2 H(+). It catalyses the reaction L-glutamine + H2O = L-glutamate + NH4(+). The catalysed reaction is UTP + NH4(+) + ATP = CTP + ADP + phosphate + 2 H(+). Its pathway is pyrimidine metabolism; CTP biosynthesis via de novo pathway; CTP from UDP: step 2/2. Allosterically activated by GTP, when glutamine is the substrate; GTP has no effect on the reaction when ammonia is the substrate. The allosteric effector GTP functions by stabilizing the protein conformation that binds the tetrahedral intermediate(s) formed during glutamine hydrolysis. Inhibited by the product CTP, via allosteric rather than competitive inhibition. Catalyzes the ATP-dependent amination of UTP to CTP with either L-glutamine or ammonia as the source of nitrogen. Regulates intracellular CTP levels through interactions with the four ribonucleotide triphosphates. The protein is CTP synthase of Cupriavidus taiwanensis (strain DSM 17343 / BCRC 17206 / CCUG 44338 / CIP 107171 / LMG 19424 / R1) (Ralstonia taiwanensis (strain LMG 19424)).